A 398-amino-acid chain; its full sequence is Lysophospholipid transporter LplT (398 aa).

12 consecutive transmembrane segments (helical) span residues 16–36 (MIAVICAQFLSAFGDNALLFA), 53–73 (ILQMAFVATYIILAPFVGQVA), 91–111 (AGALVICFGFNPFLGYTLVGV), 139–159 (LMEASTIAAILIGSVAGGILA), 163–183 (IVAALAVCAVVYAAAVIANLY), 195–213 (SWTPRAMTQAFFNACVVLW), 227–247 (LFWGAGVTLRFLLVLWVPVAL), 253–273 (ATPTLLNAMVAVGIVIGAGAA), 286–306 (MPAGILIGVAVAIFALQTTLF), 310–330 (ALLLIIGVLGGFFVVPLNALL), 344–364 (IAVQNLGENTAMLLMLGLYSL), and 372–392 (VVGVGIGFGVVFALAISALWL).

This sequence belongs to the major facilitator superfamily. LplT (TC 2.A.1.42) family.

It is found in the cell inner membrane. Its function is as follows. Catalyzes the facilitated diffusion of 2-acyl-glycero-3-phosphoethanolamine (2-acyl-GPE) into the cell. This is Lysophospholipid transporter LplT from Serratia proteamaculans (strain 568).